A 1058-amino-acid chain; its full sequence is Carbamoyl phosphate synthase large chain (1058 aa).

The tract at residues 1–401 (MAKRTDIKKI…CLLKACRSLE (401 aa)) is carboxyphosphate synthetic domain. Residues Arg129, Arg169, Gly175, Gly176, Arg208, Ile210, Glu215, Gly241, Ile242, His243, Gln284, and Glu298 each contribute to the ATP site. The ATP-grasp 1 domain maps to 133-327 (KQLMKELGEP…IAKIAAKIAV (195 aa)). Mg(2+) contacts are provided by Gln284, Glu298, and Asn300. Residues Gln284, Glu298, and Asn300 each contribute to the Mn(2+) site. An oligomerization domain region spans residues 402 to 546 (IGVDHNELKG…YSTYEWENES (145 aa)). The tract at residues 547-929 (IKSEKESVIV…ALYKAFEASY (383 aa)) is carbamoyl phosphate synthetic domain. Residues 671–861 (EKALKDLGIP…MAQVATKLIL (191 aa)) form the ATP-grasp 2 domain. ATP-binding residues include Arg707, Ser746, Ile748, Glu752, Gly777, Val778, His779, Ser780, Gln820, and Glu832. Residues Gln820, Glu832, and Asn834 each coordinate Mg(2+). Mn(2+)-binding residues include Gln820, Glu832, and Asn834. Positions 930–1058 (LHMPEYGTIV…ESRTFSIEAI (129 aa)) constitute an MGS-like domain. The interval 930-1058 (LHMPEYGTIV…ESRTFSIEAI (129 aa)) is allosteric domain.

Belongs to the CarB family. Composed of two chains; the small (or glutamine) chain promotes the hydrolysis of glutamine to ammonia, which is used by the large (or ammonia) chain to synthesize carbamoyl phosphate. Tetramer of heterodimers (alpha,beta)4. Mg(2+) is required as a cofactor. The cofactor is Mn(2+).

It carries out the reaction hydrogencarbonate + L-glutamine + 2 ATP + H2O = carbamoyl phosphate + L-glutamate + 2 ADP + phosphate + 2 H(+). The enzyme catalyses hydrogencarbonate + NH4(+) + 2 ATP = carbamoyl phosphate + 2 ADP + phosphate + 2 H(+). It functions in the pathway amino-acid biosynthesis; L-arginine biosynthesis; carbamoyl phosphate from bicarbonate: step 1/1. It participates in pyrimidine metabolism; UMP biosynthesis via de novo pathway; (S)-dihydroorotate from bicarbonate: step 1/3. In terms of biological role, large subunit of the glutamine-dependent carbamoyl phosphate synthetase (CPSase). CPSase catalyzes the formation of carbamoyl phosphate from the ammonia moiety of glutamine, carbonate, and phosphate donated by ATP, constituting the first step of 2 biosynthetic pathways, one leading to arginine and/or urea and the other to pyrimidine nucleotides. The large subunit (synthetase) binds the substrates ammonia (free or transferred from glutamine from the small subunit), hydrogencarbonate and ATP and carries out an ATP-coupled ligase reaction, activating hydrogencarbonate by forming carboxy phosphate which reacts with ammonia to form carbamoyl phosphate. The sequence is that of Carbamoyl phosphate synthase large chain from Streptococcus equi subsp. zooepidemicus (strain H70).